The sequence spans 411 residues: Adenylosuccinate synthetase (411 aa).

GTP is bound by residues 11 to 17 (GDEGKGK) and 39 to 41 (GHT). The Proton acceptor role is filled by aspartate 12. Aspartate 12 and glycine 39 together coordinate Mg(2+). Residues 12–15 (DEGK), 37–40 (NAGH), threonine 121, arginine 135, glutamine 215, threonine 230, and arginine 294 contribute to the IMP site. The Proton donor role is filled by histidine 40. 290–296 (TTTKRPR) is a binding site for substrate. GTP is bound by residues arginine 296, 322–324 (KLD), and 400–402 (STS).

This sequence belongs to the adenylosuccinate synthetase family. As to quaternary structure, homodimer. Mg(2+) is required as a cofactor.

It localises to the cytoplasm. It catalyses the reaction IMP + L-aspartate + GTP = N(6)-(1,2-dicarboxyethyl)-AMP + GDP + phosphate + 2 H(+). Its pathway is purine metabolism; AMP biosynthesis via de novo pathway; AMP from IMP: step 1/2. In terms of biological role, plays an important role in the de novo pathway of purine nucleotide biosynthesis. Catalyzes the first committed step in the biosynthesis of AMP from IMP. The protein is Adenylosuccinate synthetase of Helicobacter pylori (strain Shi470).